The following is an 856-amino-acid chain: Envelope glycoprotein GP350 (856 aa).

Residues 1–809 (MEAALLVCQY…TSQPRFSNLS (809 aa)) lie on the Virion surface side of the membrane. Residues Asn-47, Asn-87, Asn-114, Asn-166, Asn-169, Asn-195, Asn-229, Asn-277, Asn-318, Asn-328, Asn-345, Asn-356, Asn-378, Asn-386, Asn-411, Asn-435, Asn-443, Asn-457, Asn-497, Asn-519, Asn-533, Asn-554, Asn-568, Asn-582, Asn-585, Asn-603, and Asn-614 are each glycosylated (N-linked (GlcNAc...) asparagine; by host). Residues 421-779 (FSKAPESTTT…PPSTSSELRP (359 aa)) are disordered. Over residues 427 to 437 (STTTSPTSNTT) the composition is skewed to low complexity. The segment covering 442 to 488 (PNTTTGLPSSTHVPTNLTAPASTGPTVSTADVTSPTPAGTTSGASPV) has biased composition (polar residues). Residues 507–570 (TSPTPAVTTP…AVTTPTPNAT (64 aa)) are compositionally biased toward low complexity. Positions 575–616 (GETSPQANTTNHTLGGTSSTPVVTSQPKNATSAVTTGQHNIT) are enriched in polar residues. Positions 617 to 631 (SSSTSSMSLRPSSIS) are enriched in low complexity. N-linked (GlcNAc...) asparagine; by host glycosylation is present at Asn-650. Residues 654–669 (VTPASTSTHHVSTSSP) are compositionally biased toward low complexity. The segment covering 674–690 (GTTSQASGPGNSSTSTK) has biased composition (polar residues). Residues Asn-684, Asn-695, Asn-704, and Asn-729 are each glycosylated (N-linked (GlcNAc...) asparagine; by host). Residues 703–730 (KNATSPQAPSGQKTAVPTVTSTGGKANS) are compositionally biased toward polar residues. Positions 731–741 (TTGGKHTTGHG) are enriched in low complexity. The span at 743–776 (RTSTEPTTDYGGDSTTPRTRYNATTYLPPSTSSE) shows a compositional bias: polar residues. Asn-764 and Asn-807 each carry an N-linked (GlcNAc...) asparagine; by host glycan. Residues 810–830 (MLVLQWASLAVLTLLLLLVMA) form a helical membrane-spanning segment. At 831-856 (DCAFRRNLSTSHTYTTPPYDDAETYV) the chain is on the intravirion side.

The protein belongs to the Epstein-Barr GP350 family. In terms of assembly, interacts with host CR2. In terms of processing, extensively glycosylated.

The protein resides in the virion membrane. Its subcellular location is the host membrane. Functionally, initiates virion attachment to host B-lymphocyte cell, leading to virus entry. Acts by binding to host CR2 at the surface of B-lymphocytes, facilitating the binding of viral glycoprotein gp42 to HLA class II molecules. Attachment triggers virion-host membrane fusion and invasion of the host cell. The protein is Envelope glycoprotein GP350 of Homo sapiens (Human).